Reading from the N-terminus, the 53-residue chain is Membrane antigen containing repeating peptides (53 aa).

6 repeat units span residues 1–10, 11–20, 21–30, 31–40, 41–50, and 51–53. The 6 X 10 AA tandem repeats stretch occupies residues 1 to 53; that stretch reads EAEEAARLQAEAEEAARQQAEAEEAARLQAEAEEAARLQAEAEEAARLQAEAE. Positions 1–53 are disordered; it reads EAEEAARLQAEAEEAARQQAEAEEAARLQAEAEEAARLQAEAEEAARLQAEAE.

It localises to the membrane. This Leishmania major protein is Membrane antigen containing repeating peptides.